Here is a 160-residue protein sequence, read N- to C-terminus: Protein cornichon homolog 2 (160 aa).

Topologically, residues 1–10 (MAFTFAAFCY) are cytoplasmic. Residues 11–31 (MLTLVLCAALIFFVIWQIIAF) form a helical membrane-spanning segment. The Lumenal portion of the chain corresponds to 32 to 72 (DELRTDFKNPIDQSNPTRARERILNIERICNLLRRLVVPEY). The helical transmembrane segment at 73 to 93 (SIHGLFCLMFMCAGEWVTLGL) threads the bilayer. At 94 to 138 (NIPLLLYHLWRFFHRPADGSEVMYDPVSVMNADILNYCQKESWCK) the chain is on the cytoplasmic side. A helical membrane pass occupies residues 139–159 (LGFYLLSFFYYLYSMVYALVS). Residue F160 is a topological domain, lumenal.

It belongs to the cornichon family.

It is found in the membrane. Its function is as follows. Regulates the trafficking and gating properties of AMPA-selective glutamate receptors (AMPARs). This is Protein cornichon homolog 2 (cnih2) from Danio rerio (Zebrafish).